Here is a 369-residue protein sequence, read N- to C-terminus: MTQKTILNDTHRALGAKMVDFGGWDMPIHYGSQLDEHHQVRRDAGMFDVSHMTVVDLHGARVREFLRYLLANSVDKLKVSGKALYTCMLNPQGGVIDDLIVYYMTEDFFRLVVNAATREKDLQWIGEQAARFDVRVEERSDFAMIAVQGPSARTKVIDLLDPADTAAASKLGRFAALQTRSRDGIELFLARTGYTGEDGFEIVLPQQAAVAFWNALLAQGVKPAGLGARDTLRLEAGMNLYGQDMDDGVTPYEAGLAWTIALDEGRDFIGRSVLESQKAQGAPRQLIGVVMDEKGVLRHGQTVLTANGEGEILSGTFSPTLGKAIAFARVPAGSIEQLRVDIRGKQVPLRAVKFPFVRDGQAQPGVLGD.

Belongs to the GcvT family. In terms of assembly, the glycine cleavage system is composed of four proteins: P, T, L and H.

The catalysed reaction is N(6)-[(R)-S(8)-aminomethyldihydrolipoyl]-L-lysyl-[protein] + (6S)-5,6,7,8-tetrahydrofolate = N(6)-[(R)-dihydrolipoyl]-L-lysyl-[protein] + (6R)-5,10-methylene-5,6,7,8-tetrahydrofolate + NH4(+). The glycine cleavage system catalyzes the degradation of glycine. The sequence is that of Aminomethyltransferase from Xanthomonas axonopodis pv. citri (strain 306).